The following is a 295-amino-acid chain: Ankyrin repeat and SOCS box protein 17 (295 aa).

An ANK repeat occupies 146–176; sequence SGITPLLYVAQTRQSNILKILLQYGILEREK. Positions 243–295 constitute an SOCS box domain; that stretch reads DYIPPTRYKDPCELVHLCRITIRTQLLANNMLPNGIFSLLIPTRLQNFLNLES.

Belongs to the ankyrin SOCS box (ASB) family. Specifically expressed in testis. Localizes to spermatogenic cells in testis, with highest expression in round spermatids and condensing spermatids and lower expression in pachytene spermatocytes.

The protein operates within protein modification; protein ubiquitination. Functionally, may be a substrate-recognition component of a SCF-like ECS (Elongin-Cullin-SOCS-box protein) E3 ubiquitin-protein ligase complex which mediates the ubiquitination and subsequent proteasomal degradation of target proteins. The chain is Ankyrin repeat and SOCS box protein 17 (Asb17) from Mus musculus (Mouse).